The primary structure comprises 261 residues: MAAAVRSVKGLVAVVTGGASGPWLATAKRLVGQGATAVLLDVPDSEGESQAKKLGESCIFAPANVTSEKEIQAALTLAKEKFGRIDVAVNCAGIAVAIKTYHQKKNKIHTLEDFQRVINVNLIGTFNVIRLVAGEMGQNEPDQGGQRGVIINTASVAAFEGQVGQAAYSASKGGIDGMTLPIARDLAPTGIRVVTIAPGLFATPLLTTLPEKVRNFLASQVPFPSRLGDPAEYAHLVQTIIENPFLNGEVIRLDGAIRMQP.

At A2 the chain carries N-acetylalanine. 2 residues coordinate NAD(+): S20 and D41. K53 carries the post-translational modification N6-acetyllysine; alternate. N6-succinyllysine; alternate is present on K53. V65 contributes to the NAD(+) binding site. K69 carries the N6-acetyllysine modification. C91 contacts NAD(+). An N6-acetyllysine mark is found at K99 and K105. N6-acetyllysine; alternate is present on K107. The residue at position 107 (K107) is an N6-succinyllysine; alternate. A substrate-binding site is contributed by S155. NAD(+) is bound by residues Y168, K172, F201, and T203. Y168 acts as the Proton acceptor in catalysis. K212 bears the N6-acetyllysine; alternate mark. Position 212 is an N6-succinyllysine; alternate (K212).

The protein belongs to the short-chain dehydrogenases/reductases (SDR) family. In terms of assembly, homotetramer. Component of mitochondrial ribonuclease P, a complex composed of TRMT10C/MRPP1, HSD17B10/MRPP2 and PRORP/MRPP3. Interacts with TRMT10C/MRPP1; forming the MRPP1-MRPP2 subcomplex of the mitochondrial ribonuclease P complex.

It is found in the mitochondrion. Its subcellular location is the mitochondrion matrix. It localises to the mitochondrion nucleoid. It carries out the reaction a (3S)-3-hydroxyacyl-CoA + NAD(+) = a 3-oxoacyl-CoA + NADH + H(+). The catalysed reaction is (2S,3S)-3-hydroxy-2-methylbutanoyl-CoA + NAD(+) = 2-methyl-3-oxobutanoyl-CoA + NADH + H(+). It catalyses the reaction testosterone + NAD(+) = androst-4-ene-3,17-dione + NADH + H(+). The enzyme catalyses 5alpha-androstane-3alpha,17beta-diol + NAD(+) = 17beta-hydroxy-5alpha-androstan-3-one + NADH + H(+). It carries out the reaction 17beta-estradiol + NAD(+) = estrone + NADH + H(+). The catalysed reaction is cholate + NAD(+) = 3alpha,12alpha-dihydroxy-7-oxo-5beta-cholanate + NADH + H(+). It catalyses the reaction (3S)-3-hydroxybutanoyl-CoA + NAD(+) = acetoacetyl-CoA + NADH + H(+). The enzyme catalyses (3S)-hydroxyoctanoyl-CoA + NAD(+) = 3-oxooctanoyl-CoA + NADH + H(+). It carries out the reaction (3S)-hydroxyhexadecanoyl-CoA + NAD(+) = 3-oxohexadecanoyl-CoA + NADH + H(+). The catalysed reaction is 17beta-hydroxy-5alpha-androstan-3-one + NAD(+) = 5alpha-androstan-3,17-dione + NADH + H(+). It catalyses the reaction 5alpha-pregnan-20beta-ol-3-one + NAD(+) = 5alpha-pregnane-3,20-dione + NADH + H(+). The enzyme catalyses 3alpha-hydroxy-5alpha-pregnan-20-one + NAD(+) = 5alpha-pregnane-3,20-dione + NADH + H(+). It carries out the reaction cortisone + NAD(+) = 17alpha-hydroxypregn-4-en-3,11,20-trione-21-al + NADH + H(+). The catalysed reaction is 11-dehydrocorticosterone + NAD(+) = pregn-4-ene-3,11,20,21-tetraone + NADH + H(+). It catalyses the reaction cortisol + NAD(+) = 11beta,17alpha-dihydroxypregn-4-ene-3,20,21-trione + NADH + H(+). The enzyme catalyses chenodeoxycholate + NAD(+) = 7-oxolithocholate + NADH + H(+). It carries out the reaction ursodeoxycholate + NAD(+) = 7-oxolithocholate + NADH + H(+). The catalysed reaction is 3beta,7beta-dihydroxy-5beta-cholan-24-oate + NAD(+) = 3beta-hydroxy-7-oxo-5beta-cholan-24-oate + NADH + H(+). Its pathway is amino-acid degradation; L-isoleucine degradation. The protein operates within lipid metabolism; fatty acid beta-oxidation. It participates in steroid metabolism. It functions in the pathway lipid metabolism; bile acid biosynthesis. Its function is as follows. Mitochondrial dehydrogenase involved in pathways of fatty acid, branched-chain amino acid and steroid metabolism. Acts as (S)-3-hydroxyacyl-CoA dehydrogenase in mitochondrial fatty acid beta-oxidation, a major degradation pathway of fatty acids. Catalyzes the third step in the beta-oxidation cycle, namely the reversible conversion of (S)-3-hydroxyacyl-CoA to 3-ketoacyl-CoA. Preferentially accepts straight medium- and short-chain acyl-CoA substrates with highest efficiency for (3S)-hydroxybutanoyl-CoA. Acts as 3-hydroxy-2-methylbutyryl-CoA dehydrogenase in branched-chain amino acid catabolic pathway. Catalyzes the oxidation of 3-hydroxy-2-methylbutanoyl-CoA into 2-methyl-3-oxobutanoyl-CoA, a step in isoleucine degradation pathway. Has hydroxysteroid dehydrogenase activity toward steroid hormones and bile acids. Catalyzes the oxidation of 3alpha-, 17beta-, 20beta- and 21-hydroxysteroids and 7alpha- and 7beta-hydroxy bile acids. Oxidizes allopregnanolone/brexanolone at the 3alpha-hydroxyl group, which is known to be critical for the activation of gamma-aminobutyric acid receptors (GABAARs) chloride channel. Has phospholipase C-like activity toward cardiolipin and its oxidized species. Likely oxidizes the 2'-hydroxyl in the head group of cardiolipin to form a ketone intermediate that undergoes nucleophilic attack by water and fragments into diacylglycerol, dihydroxyacetone and orthophosphate. Has higher affinity for cardiolipin with oxidized fatty acids and may degrade these species during the oxidative stress response to protect cells from apoptosis. By interacting with intracellular amyloid-beta, it may contribute to the neuronal dysfunction associated with Alzheimer disease (AD). Essential for structural and functional integrity of mitochondria. In terms of biological role, in addition to mitochondrial dehydrogenase activity, moonlights as a component of mitochondrial ribonuclease P, a complex that cleaves tRNA molecules in their 5'-ends. Together with TRMT10C/MRPP1, forms a subcomplex of the mitochondrial ribonuclease P, named MRPP1-MRPP2 subcomplex, which displays functions that are independent of the ribonuclease P activity. The MRPP1-MRPP2 subcomplex catalyzes the formation of N(1)-methylguanine and N(1)-methyladenine at position 9 (m1G9 and m1A9, respectively) in tRNAs; HSD17B10/MRPP2 acting as a non-catalytic subunit. The MRPP1-MRPP2 subcomplex also acts as a tRNA maturation platform: following 5'-end cleavage by the mitochondrial ribonuclease P complex, the MRPP1-MRPP2 subcomplex enhances the efficiency of 3'-processing catalyzed by ELAC2, retains the tRNA product after ELAC2 processing and presents the nascent tRNA to the mitochondrial CCA tRNA nucleotidyltransferase TRNT1 enzyme. Associates with mitochondrial DNA complexes at the nucleoids to initiate RNA processing and ribosome assembly. This Mus musculus (Mouse) protein is 3-hydroxyacyl-CoA dehydrogenase type-2 (Hsd17b10).